A 354-amino-acid chain; its full sequence is Uroporphyrinogen decarboxylase (354 aa).

Substrate is bound by residues 27–31, Asp77, Tyr154, Ser209, and His327; that span reads RQAGR.

The protein belongs to the uroporphyrinogen decarboxylase family. Homodimer.

The protein resides in the cytoplasm. It catalyses the reaction uroporphyrinogen III + 4 H(+) = coproporphyrinogen III + 4 CO2. Its pathway is porphyrin-containing compound metabolism; protoporphyrin-IX biosynthesis; coproporphyrinogen-III from 5-aminolevulinate: step 4/4. Catalyzes the decarboxylation of four acetate groups of uroporphyrinogen-III to yield coproporphyrinogen-III. This Shewanella baltica (strain OS223) protein is Uroporphyrinogen decarboxylase.